Reading from the N-terminus, the 274-residue chain is Glutamate racemase (274 aa).

Residues 9–10 and 41–42 each bind substrate; these read DS and YG. Residue Cys73 is the Proton donor/acceptor of the active site. 74 to 75 serves as a coordination point for substrate; the sequence is NT. Residue Cys183 is the Proton donor/acceptor of the active site. 184–185 contacts substrate; that stretch reads TH.

This sequence belongs to the aspartate/glutamate racemases family.

It carries out the reaction L-glutamate = D-glutamate. The protein operates within cell wall biogenesis; peptidoglycan biosynthesis. In terms of biological role, provides the (R)-glutamate required for cell wall biosynthesis. This Shewanella baltica (strain OS155 / ATCC BAA-1091) protein is Glutamate racemase.